The following is a 359-amino-acid chain: Isopentenyl-diphosphate delta-isomerase (359 aa).

11–12 serves as a coordination point for substrate; the sequence is RK. Residues S68, 69–71, S99, and N127 contribute to the FMN site; that span reads GMT. Residue 99 to 101 coordinates substrate; that stretch reads SQR. Q163 provides a ligand contact to substrate. E164 provides a ligand contact to Mg(2+). FMN contacts are provided by residues K199, T229, 278–280, and 299–300; these read GIR and AL.

This sequence belongs to the IPP isomerase type 2 family. In terms of assembly, homooctamer. Dimer of tetramers. FMN is required as a cofactor. It depends on NADPH as a cofactor. Requires Mg(2+) as cofactor.

It is found in the cytoplasm. The catalysed reaction is isopentenyl diphosphate = dimethylallyl diphosphate. With respect to regulation, inhibited by 3,4-epoxy-3-methylbutyl diphosphate (EIPP). Its function is as follows. Involved in the biosynthesis of isoprenoids. Catalyzes the 1,3-allylic rearrangement of the homoallylic substrate isopentenyl (IPP) to its allylic isomer, dimethylallyl diphosphate (DMAPP). The protein is Isopentenyl-diphosphate delta-isomerase of Methanocaldococcus jannaschii (strain ATCC 43067 / DSM 2661 / JAL-1 / JCM 10045 / NBRC 100440) (Methanococcus jannaschii).